Consider the following 421-residue polypeptide: Signal recognition particle receptor FtsY (421 aa).

Basic residues predominate over residues 1-10 (MFSFFRRKKK). Residues 1–22 (MFSFFRRKKKQETPAPEEAQIQ) are disordered. GTP-binding positions include 228-235 (GINGAGKT), 309-313 (DTAGR), and 373-376 (TKLD).

It belongs to the GTP-binding SRP family. FtsY subfamily. As to quaternary structure, part of the signal recognition particle protein translocation system, which is composed of SRP and FtsY. SRP is a ribonucleoprotein composed of Ffh and a 4.5S RNA molecule.

The protein resides in the cell membrane. It localises to the cytoplasm. The enzyme catalyses GTP + H2O = GDP + phosphate + H(+). Involved in targeting and insertion of nascent membrane proteins into the cytoplasmic membrane. Acts as a receptor for the complex formed by the signal recognition particle (SRP) and the ribosome-nascent chain (RNC). Interaction with SRP-RNC leads to the transfer of the RNC complex to the Sec translocase for insertion into the membrane, the hydrolysis of GTP by both Ffh and FtsY, and the dissociation of the SRP-FtsY complex into the individual components. The chain is Signal recognition particle receptor FtsY from Neisseria meningitidis serogroup C.